We begin with the raw amino-acid sequence, 2803 residues long: Microtubule-associated protein 1A (2803 aa).

Phosphoserine is present on residues S114, S117, S118, S121, and S155. Y177 is subject to Phosphotyrosine. Disordered stretches follow at residues 302 to 466 (GAVP…DLKP) and 486 to 516 (IDRSRAIRGEKELSSEPQTPPAQKGTVPLPT). 3 positions are modified to phosphoserine: S319, S322, and S384. The span at 335–390 (AKREEVVEEGAKEARSELAKELAKTEKKAKESSEKPPEKPAKPERVKTESSEALKA) shows a compositional bias: basic and acidic residues. Residues 391 to 406 (EKRKLIKDKVGKKHLK) show a composition bias toward basic residues. 2 stretches are compositionally biased toward basic and acidic residues: residues 407 to 464 (EKIS…KPDL) and 486 to 499 (IDRSRAIRGEKELS). 8 tandem repeats follow at residues 415–417 (KKD), 420–422 (KKE), 427–429 (RKE), 431–433 (KKD), 436–438 (RKE), 440–442 (KKD), 444–446 (KKE), and 449–451 (RKD). Positions 415–541 (KKDKEKKEIK…TQDFEEMKRE (127 aa)) are 9 X 3 AA repeats of K-K-[DE]. Position 504 is a phosphothreonine (T504). Phosphoserine occurs at positions 526 and 527. Residues 539–541 (KRE) form repeat 9. Composition is skewed to basic and acidic residues over residues 539–554 (KREERALLAEQRDTGL) and 585–596 (QEEHVMKEKELV). Disordered regions lie at residues 539–712 (KREE…KAPE), 734–806 (YIQD…GTPE), 847–1080 (EDQS…VNID), 1109–1548 (TGPI…EKKD), and 1573–1605 (EENHQTQEQESLVQEDKTRKPKMLEEKSPEKVK). Phosphoserine is present on residues S605 and S612. T616 is modified (phosphothreonine). Basic and acidic residues predominate over residues 623 to 667 (WEEKKQREAERLPDRTEAREESEPEVKEDVIEKAELEEMEEVHPS). Phosphoserine occurs at positions 644, 667, and 787. 2 stretches are compositionally biased toward polar residues: residues 847–860 (EDQSVASLTAPQTE) and 871–883 (TVTSIPSSRTEAT). S874, S877, S878, and S891 each carry phosphoserine. T894 carries the post-translational modification Phosphothreonine. Phosphoserine occurs at positions 896, 900, 909, 986, 996, 1004, 1013, 1019, and 1029. The segment covering 1031 to 1065 (GDTKRTPGVGKEDAAEETVKPGPEEGTLEKEEKVP) has biased composition (basic and acidic residues). Phosphoserine occurs at positions 1069, 1144, 1146, 1160, 1172, 1190, 1200, 1203, 1209, 1218, 1221, and 1264. Positions 1131-1146 (KPQKDEVLRYPDRSLS) are enriched in basic and acidic residues. The span at 1154–1169 (SVLSVPSPDTANQEPT) shows a compositional bias: polar residues. 2 stretches are compositionally biased toward polar residues: residues 1211-1224 (DVSSKQLSPESLGT) and 1264-1278 (SPPTDGTTRYSAQTD). Residues 1289–1299 (PASSFSHSTPS) are compositionally biased toward low complexity. S1326, S1329, S1544, S1600, and S1626 each carry phosphoserine. Composition is skewed to basic and acidic residues over residues 1338 to 1548 (IAIK…EKKD) and 1586 to 1605 (QEDKTRKPKMLEEKSPEKVK). Residues 1632-1642 (RAREQEEKYWR) show a composition bias toward basic and acidic residues. Disordered stretches follow at residues 1632-1684 (RARE…RYWR), 1713-1879 (DGQG…FSWG), and 1892-2673 (EGAA…LVNG). At S1654 the chain carries Phosphoserine. Residues 1655–1666 (PTREEPAGEQKE) are compositionally biased toward basic and acidic residues. A phosphoserine mark is found at S1675, S1749, S1762, S1776, S1791, S1797, S1801, S1812, and S1818. Residues 1852-1867 (LPPAPLSPAPGPPTPA) are compositionally biased toward pro residues. Over residues 1907–1929 (KDYRKAEGEREEEGRAEAPDKSS) the composition is skewed to basic and acidic residues. S1931 bears the Phosphoserine mark. The segment covering 1951–1964 (PEQREPTPYPDERS) has biased composition (basic and acidic residues). Position 1957 is a phosphothreonine (T1957). The span at 2019 to 2033 (SPISPKSLQSDTPTF) shows a compositional bias: polar residues. S2022 is modified (phosphoserine). A compositionally biased stretch (pro residues) spans 2042-2066 (TVPPRPEPGPSMEPSLTPPAVPPRA). The residue at position 2058 (T2058) is a Phosphothreonine. Residues S2074, S2104, S2106, and S2108 each carry the phosphoserine modification. The segment covering 2086-2122 (PDRRSPSPKESGRSHWDDSTSDSELEKGAREQPEKEA) has biased composition (basic and acidic residues). Over residues 2175–2184 (PAPPQLPSPA) the composition is skewed to pro residues. A phosphoserine mark is found at S2235, S2252, S2256, S2259, and S2260. Residues 2257-2268 (EGSSSEATTPVI) are compositionally biased toward polar residues. Residues 2312 to 2325 (ASLDLALAPAPSLP) show a composition bias toward low complexity. At S2449 the chain carries Phosphoserine. Over residues 2461–2473 (IDDRDLSTEEVRL) the composition is skewed to basic and acidic residues. Positions 2502-2514 (SASDSGSSQSDSD) are enriched in low complexity. Pro residues predominate over residues 2559-2575 (DPPPLPQPDPRPSPPRP). Residues 2590–2602 (GRVERLREKEKVQ) show a composition bias toward basic and acidic residues. Residues S2649 and S2664 each carry the phosphoserine modification.

The protein belongs to the MAP1 family. 3 different light chains, LC1 (a cleavage product of MAP1B), LC2 (a cleavage product of MAP1A) and LC3 (produced by one of the MAP1LC3 genes), can associate with the MAP1A or MAP1B heavy chains. Interacts with TIAM2. Interacts with guanylate kinase-like domain of DLG1, DLG2 and DLG4. Binds to CSNK1D. As to quaternary structure, interacts with ELAVL4. Post-translationally, phosphorylated by CSNK1D. LC2 is generated from MAP1A by proteolytic processing. In terms of tissue distribution, brain.

The protein localises to the cytoplasm. Its subcellular location is the cytoskeleton. Its function is as follows. Structural protein involved in the filamentous cross-bridging between microtubules and other skeletal elements. The polypeptide is Microtubule-associated protein 1A (MAP1A) (Homo sapiens (Human)).